Here is a 318-residue protein sequence, read N- to C-terminus: Epithelial-stromal interaction protein 1 (318 aa).

A disordered region spans residues 1 to 60 (MNTRNRVVNSGLGASPASRPTRDPQDPSGRQGELSPVEDQREGLEAAPKGPSRESVVHAG). Coiled-coil stretches lie at residues 73–188 (NINR…HQQY) and 240–280 (LKAE…HQTE).

As to expression, highly expressed in placenta, small intestine, spleen, kidney, thymus, liver, salivary gland and testes. Weakly expressed in breast, skeletal muscle and colon. Highly expressed in breast cancer upon interaction between tumor cells and stromal cells in vitro. Expressed in blood mononuclear cells from patients with systemic lupus erythematosus (SLE).

In terms of biological role, plays a role in M1 macrophage polarization and is required for the proper regulation of gene expression during M1 versus M2 macrophage differentiation. Might play a role in RELA/p65 and STAT1 phosphorylation and nuclear localization upon activation of macrophages. This Homo sapiens (Human) protein is Epithelial-stromal interaction protein 1 (EPSTI1).